A 353-amino-acid polypeptide reads, in one-letter code: Photosystem II D2 protein (353 aa).

Residue T2 is modified to N-acetylthreonine. At T2 the chain carries Phosphothreonine. Residues 41 to 61 (CAYFALGGWFTGTTFVTSWYT) form a helical membrane-spanning segment. Residue H118 coordinates chlorophyll a. Residues 125–141 (GFMLRQFELARSVQLRP) traverse the membrane as a helical segment. Residues Q130 and N143 each coordinate pheophytin a. The chain crosses the membrane as a helical span at residues 153–166 (VFVSVFLIYPLGQS). Residue H198 participates in chlorophyll a binding. Residues 208–228 (AALLCAIHGATVENTLFEDGD) form a helical membrane-spanning segment. 2 residues coordinate a plastoquinone: H215 and F262. A Fe cation-binding site is contributed by H215. Fe cation is bound at residue H269. Residues 279–295 (GLWMSAIGVVGLALNLR) form a helical membrane-spanning segment.

The protein belongs to the reaction center PufL/M/PsbA/D family. As to quaternary structure, PSII is composed of 1 copy each of membrane proteins PsbA, PsbB, PsbC, PsbD, PsbE, PsbF, PsbH, PsbI, PsbJ, PsbK, PsbL, PsbM, PsbT, PsbX, PsbY, PsbZ, Psb30/Ycf12, at least 3 peripheral proteins of the oxygen-evolving complex and a large number of cofactors. It forms dimeric complexes. It depends on The D1/D2 heterodimer binds P680, chlorophylls that are the primary electron donor of PSII, and subsequent electron acceptors. It shares a non-heme iron and each subunit binds pheophytin, quinone, additional chlorophylls, carotenoids and lipids. There is also a Cl(-1) ion associated with D1 and D2, which is required for oxygen evolution. The PSII complex binds additional chlorophylls, carotenoids and specific lipids. as a cofactor.

The protein resides in the plastid. The protein localises to the chloroplast thylakoid membrane. It carries out the reaction 2 a plastoquinone + 4 hnu + 2 H2O = 2 a plastoquinol + O2. In terms of biological role, photosystem II (PSII) is a light-driven water:plastoquinone oxidoreductase that uses light energy to abstract electrons from H(2)O, generating O(2) and a proton gradient subsequently used for ATP formation. It consists of a core antenna complex that captures photons, and an electron transfer chain that converts photonic excitation into a charge separation. The D1/D2 (PsbA/PsbD) reaction center heterodimer binds P680, the primary electron donor of PSII as well as several subsequent electron acceptors. D2 is needed for assembly of a stable PSII complex. This Lolium perenne (Perennial ryegrass) protein is Photosystem II D2 protein.